The following is an 83-amino-acid chain: Normal mucosa of esophagus-specific gene 1 protein (83 aa).

Belongs to the complex I NDUFA4 subunit family. Expressed mainly in stomach, placenta, small intestine and colon, as well as in normal mucosa of esophagus. Down-regulated in esophageal squamous cell carcinoma.

The protein resides in the nucleus. The protein is Normal mucosa of esophagus-specific gene 1 protein (NMES1) of Homo sapiens (Human).